Consider the following 195-residue polypeptide: ATP-dependent Clp protease proteolytic subunit (195 aa).

Ser97 functions as the Nucleophile in the catalytic mechanism. The active site involves His122.

Belongs to the peptidase S14 family. Fourteen ClpP subunits assemble into 2 heptameric rings which stack back to back to give a disk-like structure with a central cavity, resembling the structure of eukaryotic proteasomes.

The protein localises to the cytoplasm. The catalysed reaction is Hydrolysis of proteins to small peptides in the presence of ATP and magnesium. alpha-casein is the usual test substrate. In the absence of ATP, only oligopeptides shorter than five residues are hydrolyzed (such as succinyl-Leu-Tyr-|-NHMec, and Leu-Tyr-Leu-|-Tyr-Trp, in which cleavage of the -Tyr-|-Leu- and -Tyr-|-Trp bonds also occurs).. Its function is as follows. Cleaves peptides in various proteins in a process that requires ATP hydrolysis. Has a chymotrypsin-like activity. Plays a major role in the degradation of misfolded proteins. The protein is ATP-dependent Clp protease proteolytic subunit of Lactobacillus gasseri (strain ATCC 33323 / DSM 20243 / BCRC 14619 / CIP 102991 / JCM 1131 / KCTC 3163 / NCIMB 11718 / NCTC 13722 / AM63).